The sequence spans 35 residues: uncharacterized protein (35 aa).

A signal peptide spans 1-25; that stretch reads MTERKLLQLLRRPFISLSLFTALRA.

This is an uncharacterized protein from Saccharomyces cerevisiae (strain ATCC 204508 / S288c) (Baker's yeast).